A 140-amino-acid polypeptide reads, in one-letter code: Lipoprotein MlpG (140 aa).

Residues 1 to 17 form the signal peptide; that stretch reads MKIINILFCLFLLMLNG. Residue C18 is the site of N-palmitoyl cysteine attachment. C18 carries S-diacylglycerol cysteine lipidation. Positions 22–57 are disordered; that stretch reads DTNTKQTKSRQKRDLTQKEATQEKPKSKSKEDLLRE. Residues 33–57 show a composition bias toward basic and acidic residues; that stretch reads KRDLTQKEATQEKPKSKSKEDLLRE.

It belongs to the Multicopy lipoprotein (Mlp) family.

It localises to the cell outer membrane. In terms of biological role, an outer membrane protein that may participate in pathogenesis. Some human Lyme disease patients have antibodies against this protein. The Mlp proteins probably undergo intragenic recombination, generating new alleles. The protein is Lipoprotein MlpG of Borreliella burgdorferi (strain ATCC 35210 / DSM 4680 / CIP 102532 / B31) (Borrelia burgdorferi).